Consider the following 230-residue polypeptide: Ribonuclease 3 (230 aa).

One can recognise an RNase III domain in the interval 1–134 (MKQLEELLST…FLGALLLDKG (134 aa)). A Mg(2+)-binding site is contributed by E47. The active site involves D51. Mg(2+) contacts are provided by D120 and E123. E123 is a catalytic residue. Residues 160-229 (DYKTCLQEFL…AKNALAQLSE (70 aa)) form the DRBM domain.

Belongs to the ribonuclease III family. As to quaternary structure, homodimer. Mg(2+) is required as a cofactor.

The protein resides in the cytoplasm. The enzyme catalyses Endonucleolytic cleavage to 5'-phosphomonoester.. Functionally, digests double-stranded RNA. Involved in the processing of primary rRNA transcript to yield the immediate precursors to the large and small rRNAs (23S and 16S). Processes some mRNAs, and tRNAs when they are encoded in the rRNA operon. Processes pre-crRNA and tracrRNA of type II CRISPR loci if present in the organism. This Streptococcus pyogenes serotype M49 (strain NZ131) protein is Ribonuclease 3.